Here is a 599-residue protein sequence, read N- to C-terminus: ATP-dependent zinc metalloprotease FtsH 3 (599 aa).

Over 1–7 the chain is Cytoplasmic; the sequence is MKYKKKN. A helical membrane pass occupies residues 8–28; that stretch reads ILFITTIIVIYLAFLFNWLEI. The Extracellular portion of the chain corresponds to 29–128; sequence GIFKPKGESI…PFSWLLSIFS (100 aa). The helical transmembrane segment at 129–149 threads the bilayer; that stretch reads ILLNFINVLSSLVFTIYIFLA. At 150-599 the chain is on the cytoplasmic side; the sequence is IHRESGKLNS…IEQLVVNTKK (450 aa). 214 to 221 serves as a coordination point for ATP; sequence GPPGTGKT. Histidine 436 lines the Zn(2+) pocket. Glutamate 437 is a catalytic residue. Positions 440 and 512 each coordinate Zn(2+).

This sequence in the central section; belongs to the AAA ATPase family. In the C-terminal section; belongs to the peptidase M41 family. As to quaternary structure, homohexamer. Zn(2+) serves as cofactor.

It is found in the cell membrane. In terms of biological role, acts as a processive, ATP-dependent zinc metallopeptidase for both cytoplasmic and membrane proteins. Plays a role in the quality control of integral membrane proteins. In Phytoplasma mali (strain AT), this protein is ATP-dependent zinc metalloprotease FtsH 3.